Consider the following 272-residue polypeptide: Energy-coupling factor transporter ATP-binding protein EcfA1 (272 aa).

The ABC transporter domain maps to 2–237; the sequence is IKVSDVCFSY…KNIIEKAKID (236 aa). Residue 37–44 coordinates ATP; it reads GHNGSGKS.

It belongs to the ABC transporter superfamily. Energy-coupling factor EcfA family. As to quaternary structure, forms a stable energy-coupling factor (ECF) transporter complex composed of 2 membrane-embedded substrate-binding proteins (S component), 2 ATP-binding proteins (A component) and 2 transmembrane proteins (T component).

It localises to the cell membrane. In terms of biological role, ATP-binding (A) component of a common energy-coupling factor (ECF) ABC-transporter complex. Unlike classic ABC transporters this ECF transporter provides the energy necessary to transport a number of different substrates. This Mesomycoplasma hyopneumoniae (strain J / ATCC 25934 / NCTC 10110) (Mycoplasma hyopneumoniae) protein is Energy-coupling factor transporter ATP-binding protein EcfA1.